Here is a 638-residue protein sequence, read N- to C-terminus: Probable lysine-specific demethylase 4F (638 aa).

The JmjN domain maps to 15-57; the sequence is IMTFYPTMEEFADFNTYVAYMESQGAHRAGLAKVIPPKEWKAR. Tyrosine 133 provides a ligand contact to 2-oxoglutarate. The JmjC domain maps to 143–309; sequence EESTKQWNLG…YGKVASQCSC (167 aa). Residues histidine 189 and glutamate 191 each coordinate Fe cation. 2-oxoglutarate contacts are provided by asparagine 199 and lysine 207. Zn(2+)-binding residues include cysteine 235 and histidine 241. A 2-oxoglutarate-binding site is contributed by lysine 242. Fe cation is bound at residue histidine 277. Residues cysteine 307 and cysteine 309 each coordinate Zn(2+). A disordered region spans residues 426 to 474; sequence PCRGCGRGRGRGRGRGRRPRELGTEETTVQSAAKRRLSVGTGSRAPGRK. Residues 431–443 show a composition bias toward basic residues; that stretch reads GRGRGRGRGRGRR.

The protein belongs to the JHDM3 histone demethylase family. Requires Fe(2+) as cofactor.

The protein resides in the nucleus. It catalyses the reaction N(6),N(6),N(6)-trimethyl-L-lysyl(9)-[histone H3] + 2 2-oxoglutarate + 2 O2 = N(6)-methyl-L-lysyl(9)-[histone H3] + 2 formaldehyde + 2 succinate + 2 CO2. Its function is as follows. Probable histone demethylase that specifically demethylates 'Lys-9' of histone H3, thereby playing a central role in histone code. The polypeptide is Probable lysine-specific demethylase 4F (Homo sapiens (Human)).